Here is a 378-residue protein sequence, read N- to C-terminus: DNA primase small subunit PriS (378 aa).

Active-site residues include D98, D100, and D282.

It belongs to the eukaryotic-type primase small subunit family. As to quaternary structure, heterodimer of a small subunit (PriS) and a large subunit (PriL). It depends on Mg(2+) as a cofactor. The cofactor is Mn(2+).

In terms of biological role, catalytic subunit of DNA primase, an RNA polymerase that catalyzes the synthesis of short RNA molecules used as primers for DNA polymerase during DNA replication. The small subunit contains the primase catalytic core and has DNA synthesis activity on its own. Binding to the large subunit stabilizes and modulates the activity, increasing the rate of DNA synthesis while decreasing the length of the DNA fragments, and conferring RNA synthesis capability. The DNA polymerase activity may enable DNA primase to also catalyze primer extension after primer synthesis. May also play a role in DNA repair. The polypeptide is DNA primase small subunit PriS (Methanosphaerula palustris (strain ATCC BAA-1556 / DSM 19958 / E1-9c)).